The chain runs to 344 residues: Inositol 2-dehydrogenase/D-chiro-inositol 3-dehydrogenase (344 aa).

It belongs to the Gfo/Idh/MocA family. As to quaternary structure, homotetramer.

The enzyme catalyses myo-inositol + NAD(+) = scyllo-inosose + NADH + H(+). It carries out the reaction 1D-chiro-inositol + NAD(+) = scyllo-inosine + NADH + H(+). The protein operates within polyol metabolism; myo-inositol degradation into acetyl-CoA; acetyl-CoA from myo-inositol: step 1/7. Functionally, involved in the oxidation of myo-inositol (MI) and D-chiro-inositol (DCI) to 2-keto-myo-inositol (2KMI or 2-inosose) and 1-keto-D-chiro-inositol (1KDCI), respectively. This chain is Inositol 2-dehydrogenase/D-chiro-inositol 3-dehydrogenase, found in Bacillus velezensis (strain DSM 23117 / BGSC 10A6 / LMG 26770 / FZB42) (Bacillus amyloliquefaciens subsp. plantarum).